We begin with the raw amino-acid sequence, 217 residues long: Ribonuclease HII (217 aa).

Positions 27–216 constitute an RNase H type-2 domain; that stretch reads SQVAGVDEAG…VKESIQEGVC (190 aa). Residues D33, E34, and D126 each coordinate a divalent metal cation.

The protein belongs to the RNase HII family. The cofactor is Mn(2+). Mg(2+) serves as cofactor.

It is found in the cytoplasm. It carries out the reaction Endonucleolytic cleavage to 5'-phosphomonoester.. Functionally, endonuclease that specifically degrades the RNA of RNA-DNA hybrids. The sequence is that of Ribonuclease HII from Chlamydia trachomatis serovar L2 (strain ATCC VR-902B / DSM 19102 / 434/Bu).